Here is a 604-residue protein sequence, read N- to C-terminus: MGLLYKGSKLLNTILDSLEDQEGGAMYISCDVSNGGPVEPETGYVPNNPLFGLALDSPQQECAASCVGCLSCQGSTALPISSLTSSDFDCGGCFDPTIGVGVGIGGGHIQISTTPPASSGNGSSNNGAGGGSSGNHGYWSTDEMASTFPGLPPLDIDPLPSLFPFSPCGASYNFAAGNPHQAASLSYTVHPHQMLISPNSHNHGQMHSQHQQHQHQQSQVQASHVGNSLLQSSGGNNIGSNGSAGGVANAASCYYETSAGTAAPPPPPAAAMYPSMSVNVSMNMTMHHGYGAGDAGGVPMQCSQMNWTPPSNSTSAAAAAAAVNVLYPPLLSPGHYPASATYSFTADFRAPAPTGLGALPPLTVGEKESPSPPANSSLAGYYPTGVGNQGYTPPHKSPTSYQAAALGLSLSAFEDEEDSNEDLDGDEGSSGGEMKPNLCRLCGKTYARPSTLKTHLRTHSGERPYRCPDCNKSFSQAANLTAHVRTHTGQKPFRCPICDRRFSQSSSVTTHMRTHSGERPYRCSSCKKSFSDSSTLTKHLRIHSGEKPYQCKLCLLRFSQSGNLNRHMRVHGNNNSSNGSNGATGVGGESSTGSGVGGGNSLLT.

Disordered stretches follow at residues 111–139 (ISTT…HGYW), 199–237 (NSHN…GGNN), 359–400 (LPPL…SPTS), and 414–434 (EDEE…GGEM). Composition is skewed to low complexity over residues 117 to 126 (ASSGNGSSNN) and 200 to 237 (SHNH…GGNN). A compositionally biased stretch (acidic residues) spans 414–427 (EDEEDSNEDLDGDE). C2H2-type zinc fingers lie at residues 437–459 (NLCR…LRTH), 465–487 (YRCP…VRTH), 493–515 (FRCP…MRTH), 521–543 (YRCS…LRIH), and 549–571 (YQCK…MRVH). The segment at 566-604 (RHMRVHGNNNSSNGSNGATGVGGESSTGSGVGGGNSLLT) is disordered. The span at 572 to 581 (GNNNSSNGSN) shows a compositional bias: low complexity. The span at 582–604 (GATGVGGESSTGSGVGGGNSLLT) shows a compositional bias: gly residues.

The protein resides in the nucleus. Its function is as follows. Transcription factor required for gene expression specific to photoreceptor cells. This Drosophila melanogaster (Fruit fly) protein is Protein glass (gl).